The primary structure comprises 501 residues: Archaemetzincin-1 (501 aa).

His-261 is a binding site for Zn(2+). Catalysis depends on Glu-262, which acts as the Proton acceptor. 5 residues coordinate Zn(2+): His-265, Cys-272, Cys-277, Cys-296, and Cys-299. Positions 349 to 370 (DSGMGCESDTEPVTSPSEPVTP) are disordered.

It belongs to the peptidase M54 family. It depends on Zn(2+) as a cofactor.

Functionally, probable zinc metalloprotease. The polypeptide is Archaemetzincin-1 (Amz1) (Rattus norvegicus (Rat)).